A 4960-amino-acid chain; its full sequence is Malformin synthetase mlfA (4960 aa).

The adenylation 1 stretch occupies residues 194–564 (ERHATNRPHS…CGRADTQVKL (371 aa)). The region spanning 705-778 (SRLEQEVQLA…EAASLAEVQE (74 aa)) is the Carrier 1 domain. Ser-739 is subject to O-(pantetheine 4'-phosphoryl)serine. Positions 816-1247 (EDVFPCTTMQ…ALNTLSLLQA (432 aa)) are condensation 1. An adenylation 2 region spans residues 1275-1650 (DRWVTRQPEG…GRKDTQVKLR (376 aa)). The 78-residue stretch at 1777 to 1854 (TPASELERTL…HLAAEVGEPA (78 aa)) folds into the Carrier 2 domain. Disordered stretches follow at residues 1855–1883 (GQSA…NDGV) and 1917–1943 (GGSS…KKNA). Low complexity-rich tracts occupy residues 1857 to 1881 (SASS…STND) and 1919 to 1936 (SSSN…SSSS). The interval 1989–2404 (EDIYPATALQ…AVSCSDKETL (416 aa)) is condensation 2. Residues 2427–2819 (RRTPHAPAVC…IGRRDGQLKL (393 aa)) are adenylation 3. The region spanning 2955–3031 (RPVTSQEREM…QLICHINTIR (77 aa)) is the Carrier 3 domain. Ser-2992 is subject to O-(pantetheine 4'-phosphoryl)serine. 2 condensation regions span residues 3049–3464 (VALA…FTFP) and 3520–3889 (SGYV…EQLV). Residues 3914–4304 (HNSRQAVCAW…VGRKDNQIKF (391 aa)) are adenylation 4. In terms of domain architecture, Carrier 4 spans 4438–4514 (MPSTAAERKM…DLSDQAKSLI (77 aa)). Ser-4475 bears the O-(pantetheine 4'-phosphoryl)serine mark. Residues 4551-4878 (DVLPTTSFQH…LQTIVQHQNN (328 aa)) are condensation 5.

Belongs to the NRP synthetase family.

It functions in the pathway secondary metabolite biosynthesis. In terms of biological role, nonribosomal peptide synthetase; part of the gene cluster that mediates the biosynthesis of malformins, cyclic pentapeptides with a disulfide bond between 2 consecutive cysteins, that show potential anti-tumor as well as antimalarial and antitrypanosomal properties. The nonribosomal peptide synthetase mlfA is responsible of the formation of the cyclic pentapeptide. The malformin biosynthesis clusters in malformin-producing fungi also contain enzymes involved in the formation of the disulfide bond between the two consecutive cysteins within malformins, in addition to additional tailoring enzymes such as methyltransferases or oxidoreductases. They are also composed of up to 4 major facilitator superfamily transporters, and transcription factors probably involved in the regulation of the expression of those clusters. This Aspergillus neoniger (strain CBS 115656) protein is Malformin synthetase mlfA.